Reading from the N-terminus, the 361-residue chain is Replication-associated protein (361 aa).

The 109-residue stretch at 8-116 folds into the CRESS-DNA virus Rep endonuclease domain; it reads RINAKNYFLT…DGDVLDHGVF (109 aa). An RCR-1 motif is present at residues 15–18; sequence FLTY. Residues E49, H57, and H59 each contribute to the a divalent metal cation site. An RCR-2 motif is present at residues 57–59; it reads HLH. Y103 acts as the For DNA cleavage activity in catalysis. An RCR-3 motif is present at residues 103–106; sequence YMEK. A divalent metal cation is bound at residue D107. The binding to RBR1 stretch occupies residues 143–153; the sequence is KASALNILREK. Residues 156 to 176 are oligomerization; it reads KDFVLQFHNLNSNLDRIFTPP. 221-228 serves as a coordination point for ATP; the sequence is GDSRTGKT.

This sequence belongs to the geminiviridae Rep protein family. In terms of assembly, homooligomer. Interacts with the replication enhancer protein (REn). Interacts with host retinoblastoma-related protein 1 (RBR1), and may thereby induce the transcription of host replicative enzymes even if the cell is not dividing anymore. Interacts with host PCNA. Interacts with host SCE1 protein. Requires Mg(2+) as cofactor. The cofactor is Mn(2+).

It localises to the host nucleus. In terms of biological role, essential for the replication of viral ssDNA. The closed circular ssDNA genome is first converted to a superhelical dsDNA. Rep binds a specific region at the genome origin of replication. It introduces an endonucleolytic nick within the conserved sequence 5'-TAATATTAC-3' in the intergenic region of the genome present in all geminiviruses, thereby initiating the rolling circle replication (RCR). Following cleavage, binds covalently to the 5'-phosphate of DNA as a tyrosyl ester. The cleavage gives rise to a free 3'-OH that serves as a primer for the cellular DNA polymerase. The polymerase synthesizes the (+) strand DNA by rolling circle mechanism. After one round of replication, a Rep-catalyzed nucleotidyl transfer reaction releases a circular single-stranded virus genome, thereby terminating the replication. Displays origin-specific DNA cleavage, nucleotidyl transferase, ATPase and helicase activities. The protein is Replication-associated protein of Tomato yellow leaf curl China virus (TYLCCNV).